Here is a 988-residue protein sequence, read N- to C-terminus: Transcription regulator srbA precursor (988 aa).

Over M1–H427 the chain is Cytoplasmic. 2 disordered regions span residues A53 to M85 and G108 to A169. Residues S125–S136 are compositionally biased toward low complexity. The interval S165–R178 is basic motif. In terms of domain architecture, bHLH spans S165–L236. Residues A179–L236 form a helix-loop-helix motif region. Positions L226–A260 form a coiled coil. The span at S267–V291 shows a compositional bias: polar residues. Residues S267 to L313 form a disordered region. Low complexity predominate over residues D301 to P310. A helical membrane pass occupies residues F428–F447. At N448–S988 the chain is on the lumenal side. The span at P866–S881 shows a compositional bias: low complexity. Residues P866–M900 are disordered.

In terms of processing, in low oxygen or sterol conditions, undergoes proteolytic cleavage by rhomboid-type protease rbdB and is released as soluble transcription factor from the membrane.

It is found in the endoplasmic reticulum membrane. It localises to the nucleus. Functionally, precursor of the transcription factor srbA, which is embedded in the endoplasmic reticulum membrane. Low oxygen or sterol conditions promote processing of this form, releasing the transcription factor form that translocates into the nucleus and activates transcription of genes required for adaptation to anaerobic growth. Transcription factor that regulates sterol biosynthesis and hyphal morphology. Plays a critical role in ergosterol biosynthesis, resistance to the azole class of antifungal drugs, and in maintenance of cell polarity. Directly binds erg11A/cyp51A upstream DNA sequence at tandem repeats, called TR34 and TR46, that produce duplicated binding sites. Also mediates regulation of iron acquisition in response to hypoxia and low iron conditions via activation of extra- and intracellular siderophore production. Positively regulates the expression of the other hypoxia adaptation key transcription factor srbB. Required for the azole-sensing and response to azole stress. Binds the high-affinity sites 5'-A-T-C-G/A-T/G-A/G-C/T-G/C-A-T-3' of target promoters. Required for virulence in murine models of invasive pulmonary aspergillosis (IPA). The chain is Transcription regulator srbA precursor from Aspergillus fumigatus (strain ATCC MYA-4609 / CBS 101355 / FGSC A1100 / Af293) (Neosartorya fumigata).